The primary structure comprises 342 residues: Trans-3-hydroxy-L-proline dehydratase (342 aa).

Residue serine 90 is the Proton acceptor of the active site. Substrate is bound by residues glycine 91–serine 92, aspartate 251, and glycine 256–threonine 257.

It belongs to the proline racemase family.

The enzyme catalyses trans-3-hydroxy-L-proline = 1-pyrroline-2-carboxylate + H2O. Its function is as follows. Catalyzes the dehydration of trans-3-hydroxy-L-proline (t3LHyp) to Delta(1)-pyrroline-2-carboxylate (Pyr2C). Displays neither proline racemase activity nor 4-hydroxyproline 2-epimerase activity. The protein is Trans-3-hydroxy-L-proline dehydratase of Brucella suis biovar 1 (strain 1330).